The following is a 602-amino-acid chain: Elongation factor 4 (602 aa).

One can recognise a tr-type G domain in the interval 7-189; the sequence is RNIRNFSIIA…AIVQRIPAPQ (183 aa). GTP is bound by residues 19–24 and 136–139; these read DHGKST and NKID.

This sequence belongs to the TRAFAC class translation factor GTPase superfamily. Classic translation factor GTPase family. LepA subfamily.

The protein localises to the cell inner membrane. The enzyme catalyses GTP + H2O = GDP + phosphate + H(+). In terms of biological role, required for accurate and efficient protein synthesis under certain stress conditions. May act as a fidelity factor of the translation reaction, by catalyzing a one-codon backward translocation of tRNAs on improperly translocated ribosomes. Back-translocation proceeds from a post-translocation (POST) complex to a pre-translocation (PRE) complex, thus giving elongation factor G a second chance to translocate the tRNAs correctly. Binds to ribosomes in a GTP-dependent manner. This chain is Elongation factor 4, found in Xylella fastidiosa (strain 9a5c).